We begin with the raw amino-acid sequence, 430 residues long: MSEGLWIATAVAAVLVVIAALILGSVRYRRRRISLIFSSLSSGPSASDRSGSYTASSGITFSQTALPVQPADRIDTGELPAVGDDATVPRDSPRHTISDVLLPESELITSPDEPEAAVPHIDAIVPPEGRLDRLRGRLARTQNAFGRSILGLIVGGDLDEDSWQELEDTLLVADLGPVATESVMSALRSRLLNSNVHTESDARTMLRDVLISELQPDMDRSIRALPHADHPAVLLIVGVNGTGKTTTVGKLARVLVADGRRVVLGAADTFRAAAADQLQTWASRVGAELVRGVEGADPASVAFDAVDKGIGAGADVVVIDTAGRLHTKVGLMDELDKIKRVVTRRAAVDEVLLVLDATIGQNGLTQVRVFAEVVDITGAVLTKLDGTAKGGIVFRIQRELGVPVKLVGLGEGPDDLAPFEPAVFVDALLE.

Positions 75-95 (DTGELPAVGDDATVPRDSPRH) are disordered. Residues 238-245 (GVNGTGKT), 320-324 (DTAGR), and 382-385 (TKLD) each bind GTP.

Belongs to the GTP-binding SRP family. FtsY subfamily. Part of the signal recognition particle protein translocation system, which is composed of SRP and FtsY.

The protein resides in the cell membrane. The protein localises to the cytoplasm. The catalysed reaction is GTP + H2O = GDP + phosphate + H(+). Involved in targeting and insertion of nascent membrane proteins into the cytoplasmic membrane. Acts as a receptor for the complex formed by the signal recognition particle (SRP) and the ribosome-nascent chain (RNC). This Mycobacterium leprae (strain TN) protein is Signal recognition particle receptor FtsY.